Consider the following 344-residue polypeptide: MRVADFDFELPPDLIAQFPPDVRGASRLLHVTAAGALHDRMFRELPTLLGADDLLVMNDTRVIKARLFGEKDSGGRVELLVERVTGEFEALAFIRASHAPKPGARIRLADDVALDVLDKQHDLTRLHFPAPVLDVLDRCGRLPLPPYIEHAPTEEDEARYQTVYANEPGAVAAPTAGLHFDAAMLGTLQTQGVRTARVTLHVGAGTFQPVRVAEVADHVMHSERYTVPAATVAAIAETRARGGRVVAVGTTSLRALEAASASGSVEAGVGETAIFITPGYRFRTVDALVTNFHLPRSTLLMLVSAFSGIETIRRAYAHAIAERYRFFSYGDAMFLEKASLETPA.

This sequence belongs to the QueA family. In terms of assembly, monomer.

It is found in the cytoplasm. It carries out the reaction 7-aminomethyl-7-carbaguanosine(34) in tRNA + S-adenosyl-L-methionine = epoxyqueuosine(34) in tRNA + adenine + L-methionine + 2 H(+). It functions in the pathway tRNA modification; tRNA-queuosine biosynthesis. Functionally, transfers and isomerizes the ribose moiety from AdoMet to the 7-aminomethyl group of 7-deazaguanine (preQ1-tRNA) to give epoxyqueuosine (oQ-tRNA). This is S-adenosylmethionine:tRNA ribosyltransferase-isomerase from Thiobacillus denitrificans (strain ATCC 25259 / T1).